The chain runs to 259 residues: PF03932 family protein CutC (259 aa).

It belongs to the CutC family. Homodimer.

It localises to the cytoplasm. This is PF03932 family protein CutC from Salmonella typhi.